A 338-amino-acid chain; its full sequence is GTPase Obg (338 aa).

Residues 1–159 (MSFIDEVKIH…RWLRLELKLM (159 aa)) form the Obg domain. Residues 160-331 (ADVGLLGMPS…LLDEIARQLW (172 aa)) form the OBG-type G domain. GTP is bound by residues 166-173 (GMPSVGKS), 191-195 (FTTLK), 213-216 (DIPG), 283-286 (NKMD), and 312-314 (SAA). Mg(2+) contacts are provided by Ser173 and Thr193.

This sequence belongs to the TRAFAC class OBG-HflX-like GTPase superfamily. OBG GTPase family. Monomer. Requires Mg(2+) as cofactor.

The protein resides in the cytoplasm. Its function is as follows. An essential GTPase which binds GTP, GDP and possibly (p)ppGpp with moderate affinity, with high nucleotide exchange rates and a fairly low GTP hydrolysis rate. Plays a role in control of the cell cycle, stress response, ribosome biogenesis and in those bacteria that undergo differentiation, in morphogenesis control. This is GTPase Obg from Geotalea daltonii (strain DSM 22248 / JCM 15807 / FRC-32) (Geobacter daltonii).